Reading from the N-terminus, the 311-residue chain is Thioredoxin reductase (311 aa).

FAD-binding positions include 15–18 (SGPA), 37–44 (EGTQFGGA), Asn53, and Val86. An intrachain disulfide couples Cys137 to Cys140. Residues Ser158, His177, Arg183, Ile240, and Tyr260 each coordinate NADP(+). FAD contacts are provided by residues Asp280 and 287 to 290 (RQAI). NADP(+) is bound at residue Arg287.

Belongs to the class-II pyridine nucleotide-disulfide oxidoreductase family. As to quaternary structure, homodimer. FAD is required as a cofactor.

The protein resides in the cytoplasm. It catalyses the reaction [thioredoxin]-dithiol + NADP(+) = [thioredoxin]-disulfide + NADPH + H(+). This Mycolicibacterium smegmatis (Mycobacterium smegmatis) protein is Thioredoxin reductase.